The primary structure comprises 271 residues: Putative glucose-6-phosphate 1-epimerase (271 aa).

Residues arginine 71 and arginine 93 each contribute to the substrate site. Histidine 151 is a catalytic residue. A substrate-binding site is contributed by aspartate 193. The active site involves glutamate 249.

The protein belongs to the glucose-6-phosphate 1-epimerase family.

The enzyme catalyses alpha-D-glucose 6-phosphate = beta-D-glucose 6-phosphate. This Haemophilus influenzae (strain ATCC 51907 / DSM 11121 / KW20 / Rd) protein is Putative glucose-6-phosphate 1-epimerase.